The following is a 426-amino-acid chain: Serine--tRNA ligase (426 aa).

T231–E233 provides a ligand contact to L-serine. R262 to E264 is a binding site for ATP. Residue E285 participates in L-serine binding. E349–S352 contacts ATP. S385 is an L-serine binding site.

Belongs to the class-II aminoacyl-tRNA synthetase family. Type-1 seryl-tRNA synthetase subfamily. As to quaternary structure, homodimer. The tRNA molecule binds across the dimer.

It is found in the cytoplasm. The catalysed reaction is tRNA(Ser) + L-serine + ATP = L-seryl-tRNA(Ser) + AMP + diphosphate + H(+). It catalyses the reaction tRNA(Sec) + L-serine + ATP = L-seryl-tRNA(Sec) + AMP + diphosphate + H(+). The protein operates within aminoacyl-tRNA biosynthesis; selenocysteinyl-tRNA(Sec) biosynthesis; L-seryl-tRNA(Sec) from L-serine and tRNA(Sec): step 1/1. Catalyzes the attachment of serine to tRNA(Ser). Is also able to aminoacylate tRNA(Sec) with serine, to form the misacylated tRNA L-seryl-tRNA(Sec), which will be further converted into selenocysteinyl-tRNA(Sec). This Legionella pneumophila subsp. pneumophila (strain Philadelphia 1 / ATCC 33152 / DSM 7513) protein is Serine--tRNA ligase.